The sequence spans 250 residues: 5-oxoprolinase subunit A 2 (250 aa).

This sequence belongs to the LamB/PxpA family. Forms a complex composed of PxpA, PxpB and PxpC.

It carries out the reaction 5-oxo-L-proline + ATP + 2 H2O = L-glutamate + ADP + phosphate + H(+). Its function is as follows. Catalyzes the cleavage of 5-oxoproline to form L-glutamate coupled to the hydrolysis of ATP to ADP and inorganic phosphate. The protein is 5-oxoprolinase subunit A 2 of Bordetella bronchiseptica (strain ATCC BAA-588 / NCTC 13252 / RB50) (Alcaligenes bronchisepticus).